The primary structure comprises 347 residues: Photosystem II assembly protein Ycf48 (347 aa).

An N-terminal signal peptide occupies residues 1–38; the sequence is MFAKQIDIHWQKMKGIKFLHWLLGTVLLWVSLSTPALA. The Arg-rich patch motif lies at 202–226; the sequence is RGSFYSTWEPGQTAWEPHNRTTSRR.

The protein belongs to the Ycf48 family. Interacts with the D1 protein (crystallized with PsbA1 or PsbA3), via the latter's C-terminal prepropeptide, may interact with parts of the mature D1 protein as well.

It localises to the cellular thylakoid lumen. Functionally, a factor required for optimal assembly of photosystem II (PSII), acting in the early stages of PSII assembly. Also plays a role in replacement of photodamaged D1 (psbA). Assists YidC in synthesis of chlorophyll-binding proteins. The chain is Photosystem II assembly protein Ycf48 from Thermosynechococcus vestitus (strain NIES-2133 / IAM M-273 / BP-1).